Consider the following 261-residue polypeptide: MDFERKPLIGMVHLKPLPGSYLYNGDFDSVIEAALRDAVTLEEAGFDAVMVENFGDVPFPKYADKTTVASLAVVAKAIRDEVSLPLGVNVLRNDGIAAYSIAYAVKADFIRVNVLSGVAYTDQGIIEGIAHELAMLRKRLPSEIKVFADVHVKHAVHFGDFEDAFLDTVERGLADAVVVSGKATGRPVDVDKLALAKEISPVPVIVGSGTSYDNLPELWKYADGFIVGTWIKRDGRVENEVSLERARKLVELAKELRQSSI.

This sequence belongs to the BtpA family.

This is an uncharacterized protein from Thermococcus kodakarensis (strain ATCC BAA-918 / JCM 12380 / KOD1) (Pyrococcus kodakaraensis (strain KOD1)).